Here is a 368-residue protein sequence, read N- to C-terminus: MSESPKKVIVGMSGGVDSSVSAWLLQQQGYQVEGLFMKNWEEDDGEEYCTAAADLADAQAVCDKLGIELHTVNFAAEYWDNVFELFLEEYKAGRTPNPDILCNKEIKFKAFLEFAAEDLGADYIATGHYVRRADVNGKSRLLRGLDGNKDQSYFLYTLGHEQIAQSLFPVGELEKPQVRKIAEDLGLVTAKKKDSTGICFIGERKFRDFLGRYLPAQPGKIITVDGDEIGEHQGLMYHTLGQRKGLGIGGTKDGTEDPWYVVDKDVENNVLIVAQGHEHPRLMSVGLIAQQLHWVDREPFTGTLRCTVKTRYRQTDIPCTINALDDDRIEVIFDEPVAAVTPGQSAVFYSGEVCLGGGIIEQRLPLTV.

ATP is bound by residues 11–18 (GMSGGVDS) and M37. Positions 97–99 (NPD) are interaction with target base in tRNA. Catalysis depends on C102, which acts as the Nucleophile. A disulfide bridge connects residues C102 and C199. Position 127 (G127) interacts with ATP. Residues 149 to 151 (KDQ) are interaction with tRNA. The active-site Cysteine persulfide intermediate is the C199. The tract at residues 311 to 312 (RY) is interaction with tRNA.

Belongs to the MnmA/TRMU family. As to quaternary structure, interacts with TusE.

The protein resides in the cytoplasm. The enzyme catalyses S-sulfanyl-L-cysteinyl-[protein] + uridine(34) in tRNA + AH2 + ATP = 2-thiouridine(34) in tRNA + L-cysteinyl-[protein] + A + AMP + diphosphate + H(+). Its function is as follows. Catalyzes the 2-thiolation of uridine at the wobble position (U34) of tRNA(Lys), tRNA(Glu) and tRNA(Gln), leading to the formation of s(2)U34, the first step of tRNA-mnm(5)s(2)U34 synthesis. Sulfur is provided by IscS, via a sulfur-relay system. Binds ATP and its substrate tRNAs. This is tRNA-specific 2-thiouridylase MnmA from Salmonella choleraesuis (strain SC-B67).